The following is a 3018-amino-acid chain: MSTLPKPQRKTKRNTNRRPMDVKFPGGGQIVGGVYLLPRKGPRLGVRATRKTSERSQPRGRRQPIPKARQPQGRHWAQPGYPWPLYGSEGCGWAGWLLSPRGSRPHWGPNDPRRRSRNLGKVIDTLTCGFADLMWYIPVVGAPLGGVAAALAHGVRAIEDGINYATGNLPGCSFSIFLLALLSCLTTPASALTYGNSSGLYHLTNDCSNSSIVLEADAMILHLPGCLPCVRVGNQSTCWHAVSPTLATPNASTPATGFRRHVDLLAGAAVVCSSLYIGDLCGSLFLAGQLFAFQPRRHWTVQDCNCSIYTGHVTGHKMAWDMMMNWSPTTTLVLSSILRVPEICASVIFGGHWGILLAVAYFGMAGNWLKVLAVLFLFAGVEAQTMIAHGVSQTTSGFASLLTPGAKQNIQLINTNGSWHINRTALNCNDSLQTGFLASLFYTHKFNSSGCPERMAACKPLAEFRQGWGQITHKNVSGPSDDRPYCWHYAPRPCEVVPARSVCGPVYCFTPSPVVVGTTDKRGNPTYTWGENETDVFMLESLRPPTGGWFGCTWMNSTGFTKTCGAPPCQIVPGNYNSSANELLCPTDCFRKHPEATYQRCGSGPWVTPRCLVDYAYRLWHYPCTVNFTLHKVRMFVGGTEHRFDVACNWTRGERCELHDRNRIEMSPLLFSTTQLSILPCSFSTMPALSTGLIHLHQNIVDVQYLYGVSTNVTSWVVKWEYIVLMFLVLADARICTCLWLMLLISTVEAAVERLVVLNAASAAGTAGWWWAVLFLCCVWYVKGRLVPACTYMALGMWPLLLTILALPPRAYAMDNEQAASLGAVGLLVITIFSITPMYKKLLNCFIWWNQYFLARAEAMVHEWVPDLRVRGGRDSIILLTCLLHPQLGFEVTKILLAVLAPLYILQYSLLKVPYFVRAHILLRACLLVRRLAGGKYVQACLLRLGAWTGTFVYDHLAPLSDWASDGLRDLAVAVEPVIFSPMEKKIITWGADTAACGDILSGLPVSARLGNLVLLGPADDMQRGGWKLLAPITAYAQQTRGLVGTIVTSLTGRDKNEVEGEVQVVSTDTQSFVATSINGVMWTVYHGPGFKTLAGPKGPVCQMYTNVDLDLVGWPSPPGARSLTPCNCGSSDLYLVTREADVIPARRRGDSRAALLSPRPISTLKGSSGGPIMCPSGHVVGLFRAAVCTRGVAKSLDFIPVENMETTMRSPSFTDNSTPPAVPQTYQVGYLHAPTGSGKSTRVPAAYASQGYKVLVLNPSVAATLSFGSYMRQAYGVEPNIRTGVRTVTTGGAITYSTYGEFLADGGCSGGAYDIIICDECHSTDPTTVLGVGTVLDQAETAGVRLTVLPTATPPGSVTVPHPNITETALPTTGEIPFYGKAIPLEYIKGGRHLIFCHSKKKCDELAGKLKSLGLNAVAFYRGVDVSVIPTSGDVVVCATDALMTGYTGDFDSVIDCNVAVTQVVDFSLDPTFSIETTTVPQDAVSRSQRRGRTGRGKPGVYRFVSQGERPSGMFDTVVLCEAYDTGCAWYELTPSETTVRLRAYMNTPGLPVCQDHLEFWEGVFTGLTHIDAHFLSHTKQAGENFAYLVAYQATVCARAKAPPPSWDMMWKCLIRLKPTLTGPTPLLYRLGAVQNGVITTHPITKYIMTCMSADLEVITSTWVLVGGVLAALAAYCLSVGCVVICGRITLTGKPAVVPDREILYQQFDEMEECSRHIPYLAEGQQIAEQFRQKVLGLLQASAKQAEELKPAVHSAWPRVEDFWRKHMWNFVSGIQYLAGLSTLPGNPAVASLMSFTASLTSPLRTSQTLLLNILGGWIAAQVAPPPASTAFVVSGLAGAAVGSIRLGRVLVDVLAGYGAGVSGALVAFKIMSGECPSTEDMVNLLPALLSPGVALVGVVCAAILRRHVGPAEGANQWMNRLIAFASRGNHVSPTHYVPETDASKNVTQILTSLTITSLLRRLHQWVNEDTATPCATSWLRDVWDWVCTVLSDFKVWLQAKLFPRLPGIPFLSCQAGYRGVWAGDGVCHTTCTCGAVIAGHVKNGTMKITGPKTCSNTWHGTFPINATTTGPSTPRPAPNYQRALWRVSAEDYVEVRRLGDCHYVVGVTAEGLKCPCQVPAPEFFTEVDGVRIHRYAPPCKPLLRDEVTFSVGLSNYAVGSQLPCEPEPDVTVVTSMLTDPTHITAETAARRLKKGSPPSLASSSANQLSAPSLRATCTTSQKHPEMELLQANLLWKHEMGSHIPRVQSENKVVVLDSFELYPLEYEEREISVSVECHRQPRCKFPPVFPVWARPDNNPPFIQAWQMPGYEPPVVSGCAVAPPKPAPVPPPRRKRLVHLDESTVSHALAQLADKVFVESSNDPGPSSDSGLSITSPVPPDPTTPEDAGSEAESYSSMPPLEGEPGDPDLSSGSWSTVSDEDDVVCCSMSYSWTGALITPCAAEEEKLPINPLSNSLVRHHNMVYSTTSRSASLRQKKVTFDRVQVFDQHYQDVLKEIKLRASTVQAKLLSIEEACDLTPSHSARSKYGYGAQDVRSRASKAVDHIPSVWEGLLEDSDTPIPTTIMAKNEVFCVDPSKGGRKPARLIVYPDLGVRVCEKMALYDVTQKLPQAVMGPAYGFQYSPNQRVEYLLKMWRSKKVPMGFSYDTRCFDSTVTERDIRTENDIYQSCQLDPVARRVVSSLTERLYVGGPMANSKGQSCGYRRCRASGVLPTSMGNTLTCYLKAQAACRAANIKDCDMLVCGDDLVVICESAGVQEDTASLRAFTDAMTRYSAPPGDAPQPTYDLELITSCSSNVSVAHEGNGKKYYYLTRDCTTPLARAAWETARHTPVNSWLGNIIMFAPTIWVRMVLMNHFFSILQSQEQLEKAFDFDIYGVTYSVSPLDLPAIIQRLHGMAAFSLHGYSPVELNRVGACLRKLGVLPSRAWRHRARAVRAKLIAQGGKAAICGKYLFNWAVKTKLKLTPLVSASKLDLSGWFVAGYDGGDIYHSVSQARPRFLLLGLLLLTVGVGIFLLPAR.

N-acetylserine; by host is present on S2. Positions 2 to 23 are interaction with STAT1; that stretch reads STLPKPQRKTKRNTNRRPMDVK. The tract at residues 2–58 is interaction with EIF2AK2/PKR; that stretch reads STLPKPQRKTKRNTNRRPMDVKFPGGGQIVGGVYLLPRKGPRLGVRATRKTSERSQP. The interaction with DDX3X stretch occupies residues 2–59; it reads STLPKPQRKTKRNTNRRPMDVKFPGGGQIVGGVYLLPRKGPRLGVRATRKTSERSQPR. Positions 2–75 are disordered; it reads STLPKPQRKT…PKARQPQGRH (74 aa). Over 2 to 168 the chain is Cytoplasmic; the sequence is STLPKPQRKT…EDGINYATGN (167 aa). 2 short sequence motifs (nuclear localization signal) span residues 5–13 and 38–43; these read PKPQRKTKR and PRKGPR. Residues 7–16 are compositionally biased toward basic residues; the sequence is PQRKTKRNTN. At S53 the chain carries Phosphoserine; by host. 2 short sequence motifs (nuclear localization signal) span residues 58-64 and 66-71; these read PRGRRQP and PKARQP. S99 and S116 each carry phosphoserine; by host. The segment at 112-152 is important for endoplasmic reticulum and mitochondrial localization; the sequence is PRRRSRNLGKVIDTLTCGFADLMWYIPVVGAPLGGVAAALA. Residues 122-173 are interaction with APOA2; sequence VIDTLTCGFADLMWYIPVVGAPLGGVAAALAHGVRAIEDGINYATGNLPGCS. The interval 164–167 is important for lipid droplets localization; the sequence is YATG. The chain crosses the membrane as a helical span at residues 169–189; it reads LPGCSFSIFLLALLSCLTTPA. The propeptide at 178-191 is ER anchor for the core protein, removed in mature form by host signal peptidase; that stretch reads LLALLSCLTTPASA. At 190–358 the chain is on the lumenal side; it reads SALTYGNSSG…FGGHWGILLA (169 aa). N196, N209, N234, and N250 each carry an N-linked (GlcNAc...) asparagine; by host glycan. An important for fusion region spans residues 265–296; sequence LAGAAVVCSSLYIGDLCGSLFLAGQLFAFQPR. N305 is a glycosylation site (N-linked (GlcNAc...) asparagine; by host). The chain crosses the membrane as a helical span at residues 359–379; that stretch reads VAYFGMAGNWLKVLAVLFLFA. The Lumenal portion of the chain corresponds to 380–729; sequence GVEAQTMIAH…WEYIVLMFLV (350 aa). An HVR1 region spans residues 385-411; that stretch reads TMIAHGVSQTTSGFASLLTPGAKQNIQ. 3 N-linked (GlcNAc...) (high mannose) asparagine; by host glycosylation sites follow: N416, N422, and N429. 4 cysteine pairs are disulfide-bonded: C428–C552, C451–C458, C486–C494, and C503–C508. Residue N447 is glycosylated (N-linked (GlcNAc...) asparagine; by host). An HVR2 region spans residues 474-478; that stretch reads KNVSG. N475 carries an N-linked (GlcNAc...) asparagine; by host glycan. Positions 480–493 are CD81-binding 1; it reads SDDRPYCWHYAPRP. N532 carries an N-linked (GlcNAc...) asparagine; by host glycan. Residues 544–551 form a CD81-binding 2 region; it reads PPTGGWFG. An N-linked (GlcNAc...) asparagine; by host glycan is attached at N556. C564 and C569 are joined by a disulfide. Residue N577 is glycosylated (N-linked (GlcNAc...) asparagine; by host). Disulfide bonds link C585–C589, C601–C624, and C611–C648. N627 and N649 each carry an N-linked (GlcNAc...) (high mannose) asparagine; by host glycan. A disulfide bridge links C656 with C681. Residues 664-675 form a PKR/eIF2-alpha phosphorylation homology domain (PePHD) region; the sequence is IEMSPLLFSTTQ. A helical membrane pass occupies residues 730–750; sequence LADARICTCLWLMLLISTVEA. Residues 751-761 are Lumenal-facing; sequence AVERLVVLNAA. Residues 762–782 form a helical membrane-spanning segment; it reads SAAGTAGWWWAVLFLCCVWYV. Over 783–786 the chain is Cytoplasmic; the sequence is KGRL. A helical membrane pass occupies residues 787 to 807; the sequence is VPACTYMALGMWPLLLTILAL. Residues 808 to 817 are Lumenal-facing; sequence PPRAYAMDNE. Residues 818–838 form a helical membrane-spanning segment; sequence QAASLGAVGLLVITIFSITPM. Topologically, residues 839–885 are cytoplasmic; it reads YKKLLNCFIWWNQYFLARAEAMVHEWVPDLRVRGGRDSIILLTCLLH. Residues 886-906 form a helical membrane-spanning segment; the sequence is PQLGFEVTKILLAVLAPLYIL. The Lumenal portion of the chain corresponds to 907–932; that stretch reads QYSLLKVPYFVRAHILLRACLLVRRL. The Peptidase C18 domain maps to 907-1030; that stretch reads QYSLLKVPYF…DMQRGGWKLL (124 aa). The segment at 908–1210 is protease NS2-3; the sequence is YSLLKVPYFV…PVENMETTMR (303 aa). C926 carries S-palmitoyl cysteine; by host lipidation. A helical membrane pass occupies residues 933-953; that stretch reads AGGKYVQACLLRLGAWTGTFV. An interaction with host SCPS1 region spans residues 933–953; sequence AGGKYVQACLLRLGAWTGTFV. Residues 954 to 1661 lie on the Cytoplasmic side of the membrane; sequence YDHLAPLSDW…CMSADLEVIT (708 aa). Catalysis depends on for protease NS2 activity; shared with dimeric partner residues H956, E976, and C997. A Peptidase S29 domain is found at 1031 to 1212; the sequence is APITAYAQQT…ENMETTMRSP (182 aa). Catalysis depends on charge relay system; for serine protease NS3 activity residues H1087 and D1111. The Zn(2+) site is built by C1127 and C1129. S1169 functions as the Charge relay system; for serine protease NS3 activity in the catalytic mechanism. C1175 and H1179 together coordinate Zn(2+). An ATP-binding site is contributed by 1234 to 1241; it reads APTGSGKS. Mg(2+) contacts are provided by S1241 and E1321. Positions 1320-1323 match the DECH box motif; that stretch reads DECH. The tract at residues 1490-1502 is RNA-binding; sequence QRRGRTGRGKPGV. The chain crosses the membrane as a helical span at residues 1662-1682; the sequence is STWVLVGGVLAALAAYCLSVG. Residues 1683 to 1694 are NS3-binding; that stretch reads CVVICGRITLTG. Topologically, residues 1683–1809 are cytoplasmic; it reads CVVICGRITL…SLTSPLRTSQ (127 aa). The chain crosses the membrane as a helical span at residues 1810–1830; that stretch reads TLLLNILGGWIAAQVAPPPAS. The Lumenal segment spans residues 1831-1832; sequence TA. A helical membrane pass occupies residues 1833-1853; the sequence is FVVSGLAGAAVGSIRLGRVLV. Position 1854 (D1854) is a topological domain, cytoplasmic. Residues 1855–1875 traverse the membrane as a helical segment; the sequence is VLAGYGAGVSGALVAFKIMSG. The Lumenal portion of the chain corresponds to 1876 to 1885; that stretch reads ECPSTEDMVN. The chain crosses the membrane as a helical span at residues 1886–1906; the sequence is LLPALLSPGVALVGVVCAAIL. The Cytoplasmic portion of the chain corresponds to 1907-1976; sequence RRHVGPAEGA…WVNEDTATPC (70 aa). C1976 is lipidated: S-palmitoyl cysteine; by host. The stretch at 1977-2006 is an intramembrane region; it reads ATSWLRDVWDWVCTVLSDFKVWLQAKLFPR. The Cytoplasmic portion of the chain corresponds to 2007–2997; it reads LPGIPFLSCQ…YHSVSQARPR (991 aa). Zn(2+) is bound by residues C2015, C2033, C2035, and C2056. The tract at residues 2124–2212 is FKBP8-binding; the sequence is EFFTEVDGVR…ASSSANQLSA (89 aa). Residues 2124–2337 form a transcriptional activation region; sequence EFFTEVDGVR…PVPPPRRKRL (214 aa). An interaction with non-structural protein 4A region spans residues 2139–2143; sequence PPCKP. A disordered region spans residues 2192–2215; it reads RRLKKGSPPSLASSSANQLSAPSL. Positions 2193-2445 are interaction with host SKP2; the sequence is RLKKGSPPSL…ALITPCAAEE (253 aa). 5 positions are modified to phosphoserine; by host: S2198, S2201, S2205, S2211, and S2214. Over residues 2198–2215 the composition is skewed to low complexity; it reads SPPSLASSSANQLSAPSL. The tract at residues 2214-2253 is ISDR; the sequence is SLRATCTTSQKHPEMELLQANLLWKHEMGSHIPRVQSENK. An interaction with EIF2AK2/PKR region spans residues 2214–2279; it reads SLRATCTTSQ…REISVSVECH (66 aa). The interval 2253–2311 is NS4B-binding; the sequence is KVVVLDSFELYPLEYEEREISVSVECHRQPRCKFPPVFPVWARPDNNPPFIQAWQMPGY. The tract at residues 2304 to 2382 is V3; that stretch reads QAWQMPGYEP…SITSPVPPDP (79 aa). An SH3-binding motif is present at residues 2327-2330; that stretch reads APVP. A Nuclear localization signal motif is present at residues 2332–2340; the sequence is PRRKRLVHL. K2355 participates in a covalent cross-link: Glycyl lysine isopeptide (Lys-Gly) (interchain with G-Cter in ubiquitin). Residues 2359-2417 form a disordered region; sequence ESSNDPGPSSDSGLSITSPVPPDPTTPEDAGSEAESYSSMPPLEGEPGDPDLSSGSWST. Residues 2360-2373 show a composition bias toward low complexity; that stretch reads SSNDPGPSSDSGLS. A phosphoserine; by host mark is found at S2456 and S2469. A RdRp catalytic domain is found at 2641 to 2759; that stretch reads PMGFSYDTRC…ICESAGVQED (119 aa). 3 residues coordinate Mg(2+): D2647, D2745, and D2746. The chain crosses the membrane as a helical span at residues 2998–3018; sequence FLLLGLLLLTVGVGIFLLPAR.

Belongs to the hepacivirus polyprotein family. In terms of assembly, homooligomer. Interacts with E1 (via C-terminus). Interacts with the non-structural protein 5A. Interacts (via N-terminus) with host STAT1 (via SH2 domain); this interaction results in decreased STAT1 phosphorylation and ubiquitin-mediated proteasome-dependent STAT1 degradation, leading to decreased IFN-stimulated gene transcription. Interacts with host STAT3; this interaction constitutively activates STAT3. Interacts with host LTBR receptor. Interacts with host TNFRSF1A receptor and possibly induces apoptosis. Interacts with host HNRPK. Interacts with host YWHAE. Interacts with host UBE3A/E6AP. Interacts with host DDX3X. Interacts with host APOA2. Interacts with host RXRA protein. Interacts with host SP110 isoform 3/Sp110b; this interaction sequesters the transcriptional corepressor SP110 away from the nucleus. Interacts with host CREB3 nuclear transcription protein; this interaction triggers cell transformation. Interacts with host ACY3. Interacts with host C1QR1. Interacts with host RBM24; this interaction, which enhances the interaction of the mature core protein with 5'-UTR, may inhibit viral translation and favor replication. Interacts with host EIF2AK2/PKR; this interaction induces the autophosphorylation of EIF2AK2. Part of the viral assembly initiation complex composed of NS2, E1, E2, NS3, NS4A, NS5A and the mature core protein. Forms a heterodimer with envelope glycoprotein E2. Interacts with mature core protein. Interacts with protease NS2. The heterodimer E1/E2 interacts with host CLDN1; this interaction plays a role in viral entry into host cell. Interacts with host SPSB2 (via C-terminus). Part of the viral assembly initiation complex composed of NS2, E1, E2, NS3, NS4A, NS5A and the mature core protein. Interacts with host NEURL3; this interaction prevents E1 binding to glycoprotein E2. As to quaternary structure, forms a heterodimer with envelope glycoprotein E1. Interacts with host CD81 and SCARB1 receptors; these interactions play a role in viral entry into host cell. Interacts with host EIF2AK2/PKR; this interaction inhibits EIF2AK2 and probably allows the virus to evade the innate immune response. Interacts with host CD209/DC-SIGN and CLEC4M/DC-SIGNR. Interact with host SPCS1; this interaction is essential for viral particle assembly. Interacts with protease NS2. The heterodimer E1/E2 interacts with host CLDN1; this interaction plays a role in viral entry into host cell. Part of the viral assembly initiation complex composed of NS2, E1, E2, NS3, NS4A, NS5A and the mature core protein. Interacts with host SLC3A2/4F2hc; the interaction may facilitate viral entry into host cell. Interacts with human PLSCR1. In terms of assembly, homohexamer. Homoheptamer. Interacts with protease NS2. Homodimer. Interacts with host SPCS1; this interaction is essential for viral particle assembly. Interacts with envelope glycoprotein E1. Interacts with envelope glycoprotein E2. Interacts with viroporin p7. Interacts with serine protease/helicase NS3. Part of the replication complex composed of NS2, NS3, NS4A, NS4B, NS5A and the RNA-directed RNA polymerase embedded in an ER-derived membranous web. Part of the viral assembly initiation complex composed of NS2, E1, E2, NS3, NS4A, NS5A and the mature core protein. As to quaternary structure, interacts with protease NS2. Interacts with non-structural protein 4A; this interaction stabilizes the folding of NS3 serine protease. NS3-NS4A interaction is essential for NS3 activation and allows membrane anchorage of the latter. NS3/NS4A complex also prevents phosphorylation of host IRF3, thus preventing the establishment of dsRNA induced antiviral state. Interacts with host MAVS; this interaction leads to the cleavage and inhibition of host MAVS. Interacts with host TICAM1; this interaction leads to the cleavage and inhibition of host TICAM1. Interacts with host TANK-binding kinase/TBK1; this interaction results in the inhibition of the association between TBK1 and IRF3, which leads to the inhibition of IRF3 activation. Interacts with host RBM24. Part of the replication complex composed of NS2, NS3, NS4A, NS4B, NS5A and the RNA-directed RNA polymerase embedded in an ER-derived membranous web. Part of the viral assembly initiation complex composed of NS2, E1, E2, NS3, NS4A, NS5A and the mature core protein. In terms of assembly, interacts with NS3 serine protease; this interaction stabilizes the folding of NS3 serine protease. NS3-NS4A interaction is essential for NS3 activation and allows membrane anchorage of the latter. Interacts with non-structural protein 5A (via N-terminus). Part of the replication complex composed of NS2, NS3, NS4A, NS4B, NS5A and the RNA-directed RNA polymerase embedded in an ER-derived membranous web. Part of the viral assembly initiation complex composed of NS2, E1, E2, NS3, NS4A, NS5A and the mature core protein. Homomultimer. Interacts with non-structural protein NS5A. Interacts with host PLA2G4C; this interaction likely initiates the recruitment of replication complexes to lipid droplets. Interacts with host STING; this interaction disrupts the interaction between STING and TBK1 thereby suppressing the interferon signaling. Part of the replication complex composed of NS2, NS3, NS4A, NS4B, NS5A and the RNA-directed RNA polymerase embedded in an ER-derived membranous web. As to quaternary structure, monomer. Homodimer; dimerization is required for RNA-binding. Interacts with the mature core protein. Interacts (via N-terminus) with non-structural protein 4A. Interacts with non-structural protein 4B. Interacts (via region D2) with RNA-directed RNA polymerase. Part of the viral assembly initiation complex composed of NS2, E1, E2, NS3, NS4A, NS5A and the mature core protein. Part of the replication complex composed of NS2, NS3, NS4A, NS4B, NS5A and the RNA-directed RNA polymerase embedded in an ER-derived membranous web. Interacts with host GRB2. Interacts with host BIN1. Interacts with host PIK3R1. Interacts with host SRCAP. Interacts with host FKBP8. Interacts (via C-terminus) with host VAPB (via MSP domain). Interacts with host EIF2AK2/PKR; this interaction leads to disruption of EIF2AK2 dimerization by NS5A and probably allows the virus to evade the innate immune response. Interacts (via N-terminus) with host PACSIN2 (via N-terminus); this interaction attenuates protein kinase C alpha-mediated phosphorylation of PACSIN2 by disrupting the interaction between PACSIN2 and PRKCA. Interacts (via N-terminus) with host SRC kinase (via SH2 domain). Interacts with most Src-family kinases. Interacts with host IFI27 and SKP2; promotes the ubiquitin-mediated proteasomal degradation of NS5A. Interacts with host GPS2. Interacts with host TNFRSF21; this interaction allows the modulation by the virus of JNK, p38 MAPK, STAT3, and Akt signaling pathways in a DR6-dependent manner. Interacts (via N-terminus) with host CIDEB (via N-terminus); this interaction seems to regulate the association of HCV particles with APOE. Interacts with host CHKA/Choline Kinase-alpha; CHKA bridges host PI4KA and NS5A and potentiates NS5A-stimulated PI4KA activity, which then facilitates the targeting of the ternary complex to the ER for viral replication. Interacts with host SPSB2 (via C-terminus); this interaction targets NS5A for ubiquitination and degradation. Interacts with host RAB18; this interaction may promote the association of NS5A and other replicase components with lipid droplets. Interacts (via region D2) with host PPIA/CYPA; the interaction stimulates RNA-binding ability of NS5A and is dependent on the peptidyl-prolyl cis-trans isomerase activity of PPIA/CYPA. Interacts with host TRIM14; this interaction induces the degradation of NS5A. In terms of assembly, homooligomer. Interacts with non-structural protein 5A. Interacts with host VAPB. Interacts with host PRK2/PKN2. Interacts with host HNRNPA1 and SEPT6; these interactions facilitate viral replication. Part of the replication complex composed of NS2, NS3, NS4A, NS4B, NS5A and the RNA-directed RNA polymerase. Zn(2+) is required as a cofactor. Requires Mg(2+) as cofactor. Specific enzymatic cleavages in vivo yield mature proteins. The structural proteins, core, E1, E2 and p7 are produced by proteolytic processing by host signal peptidases. The core protein precursor is synthesized as a 23 kDa, which is retained in the ER membrane through the hydrophobic signal peptide. Cleavage by the signal peptidase releases the 21 kDa mature core protein. The cleavage of the core protein precursor occurs between aminoacids 176 and 188 but the exact cleavage site is not known. Some degraded forms of the core protein appear as well during the course of infection. The other proteins (p7, NS2, NS3, NS4A, NS4B, NS5A and NS5B) are cleaved by the viral proteases. Autoprocessing between NS2 and NS3 is mediated by the NS2 cysteine protease catalytic domain and regulated by the NS3 N-terminal domain. In terms of processing, phosphorylated by host PKC and PKA. Post-translationally, ubiquitinated; mediated by UBE3A and leading to core protein subsequent proteasomal degradation. Highly N-glycosylated. In terms of processing, palmitoylation is required for NS2/3 autoprocessing and E2 recruitment to membranes. Post-translationally, palmitoylated. This modification may play a role in its polymerization or in protein-protein interactions. Phosphorylated on serines in a basal form termed p56. p58 is a hyperphosphorylated form of p56. p56 and p58 coexist in the cell in roughly equivalent amounts. Hyperphosphorylation is dependent on the presence of NS4A. Host CSNK1A1/CKI-alpha or RPS6KB1 kinases may be responsible for NS5A phosphorylation. In terms of processing, tyrosine phosphorylation is essential for the interaction with host SRC. Post-translationally, the N-terminus is phosphorylated by host PRK2/PKN2.

The protein resides in the host endoplasmic reticulum membrane. Its subcellular location is the host mitochondrion membrane. The protein localises to the virion. It localises to the host cytoplasm. It is found in the host nucleus. The protein resides in the host lipid droplet. Its subcellular location is the virion membrane. The protein localises to the host mitochondrion. It localises to the host cell membrane. It is found in the host perinuclear region. It catalyses the reaction Hydrolysis of four peptide bonds in the viral precursor polyprotein, commonly with Asp or Glu in the P6 position, Cys or Thr in P1 and Ser or Ala in P1'.. It carries out the reaction a ribonucleoside 5'-triphosphate + H2O = a ribonucleoside 5'-diphosphate + phosphate + H(+). The enzyme catalyses ATP + H2O = ADP + phosphate + H(+). The catalysed reaction is RNA(n) + a ribonucleoside 5'-triphosphate = RNA(n+1) + diphosphate. Inhibited by the antiviral drug hexamethylene amiloride. Inhibition by amantadine appears to be genotype-dependent. Also inhibited by long-alkyl-chain iminosugar derivatives. With respect to regulation, activity is up-regulated by PRK2/PKN2-mediated phosphorylation. In terms of biological role, packages viral RNA to form a viral nucleocapsid, and promotes virion budding. Participates in the viral particle production as a result of its interaction with the non-structural protein 5A. Binds RNA and may function as a RNA chaperone to induce the RNA structural rearrangements taking place during virus replication. Modulates viral translation initiation by interacting with viral IRES and 40S ribosomal subunit. Affects various cell signaling pathways, host immunity and lipid metabolism. Prevents the establishment of cellular antiviral state by blocking the interferon-alpha/beta (IFN-alpha/beta) and IFN-gamma signaling pathways and by blocking the formation of phosphorylated STAT1 and promoting ubiquitin-mediated proteasome-dependent degradation of STAT1. Activates STAT3 leading to cellular transformation. Regulates the activity of cellular genes, including c-myc and c-fos. May repress the promoter of p53, and sequester CREB3 and SP110 isoform 3/Sp110b in the cytoplasm. Represses cell cycle negative regulating factor CDKN1A, thereby interrupting an important check point of normal cell cycle regulation. Targets transcription factors involved in the regulation of inflammatory responses and in the immune response: suppresses TNF-induced NF-kappa-B activation, and activates AP-1. Binds to dendritic cells (DCs) via C1QR1, resulting in down-regulation of T-lymphocytes proliferation. Alters lipid metabolism by interacting with hepatocellular proteins involved in lipid accumulation and storage. Induces up-regulation of FAS promoter activity, and thereby contributes to the increased triglyceride accumulation in hepatocytes (steatosis). Functionally, forms a heterodimer with envelope glycoprotein E2, which mediates virus attachment to the host cell, virion internalization through clathrin-dependent endocytosis and fusion with host membrane. Fusion with the host cell is most likely mediated by both E1 and E2, through conformational rearrangements of the heterodimer required for fusion rather than a classical class II fusion mechanism. E1/E2 heterodimer binds host apolipoproteins such as APOB and ApoE thereby forming a lipo-viro-particle (LVP). APOE associated to the LVP allows the initial virus attachment to cell surface receptors such as the heparan sulfate proteoglycans (HSPGs), syndecan-1 (SDC1), syndecan-1 (SDC2), the low-density lipoprotein receptor (LDLR) and scavenger receptor class B type I (SCARB1). The cholesterol transfer activity of SCARB1 allows E2 exposure and binding of E2 to SCARB1 and the tetraspanin CD81. E1/E2 heterodimer binding on CD81 activates the epithelial growth factor receptor (EGFR) signaling pathway. Diffusion of the complex E1-E2-EGFR-SCARB1-CD81 to the cell lateral membrane allows further interaction with Claudin 1 (CLDN1) and occludin (OCLN) to finally trigger HCV entry. Its function is as follows. Forms a heterodimer with envelope glycoprotein E1, which mediates virus attachment to the host cell, virion internalization through clathrin-dependent endocytosis and fusion with host membrane. Fusion with the host cell is most likely mediated by both E1 and E2, through conformational rearrangements of the heterodimer required for fusion rather than a classical class II fusion mechanism. The interaction between envelope glycoprotein E2 and host apolipoprotein E/APOE allows the proper assembly, maturation and infectivity of the viral particles. This interaction is probably promoted via the up-regulation of cellular autophagy by the virus. E1/E2 heterodimer binds host apolipoproteins such as APOB and APOE thereby forming a lipo-viro-particle (LVP). APOE associated to the LVP allows the initial virus attachment to cell surface receptors such as the heparan sulfate proteoglycans (HSPGs), syndecan-1 (SDC1), syndecan-1 (SDC2), the low-density lipoprotein receptor (LDLR) and scavenger receptor class B type I (SCARB1). The cholesterol transfer activity of SCARB1 allows E2 exposure and binding of E2 to SCARB1 and the tetraspanin CD81. E1/E2 heterodimer binding on CD81 activates the epithelial growth factor receptor (EGFR) signaling pathway. Diffusion of the complex E1-E2-EGFR-SCARB1-CD81 to the cell lateral membrane allows further interaction with Claudin 1 (CLDN1) and occludin (OCLN) to finally trigger HCV entry. Inhibits host EIF2AK2/PKR activation, preventing the establishment of an antiviral state. Viral ligand for CD209/DC-SIGN and CLEC4M/DC-SIGNR, which are respectively found on dendritic cells (DCs), and on liver sinusoidal endothelial cells and macrophage-like cells of lymph node sinuses. These interactions allow the capture of circulating HCV particles by these cells and subsequent facilitated transmission to permissive cells such as hepatocytes and lymphocyte subpopulations. The interaction between E2 and host amino acid transporter complex formed by SLC3A2 and SLC7A5/LAT1 may facilitate viral entry into host cell. Ion channel protein that acts as a viroporin and plays an essential role in the assembly, envelopment and secretion of viral particles. Regulates the host cell secretory pathway, which induces the intracellular retention of viral glycoproteins and favors assembly of viral particles. Creates a pore in acidic organelles and releases Ca(2+) and H(+) in the cytoplasm of infected cells, leading to a productive viral infection. High levels of cytoplasmic Ca(2+) may trigger membrane trafficking and transport of viral ER-associated proteins to viroplasms, sites of viral genome replication. This ionic imbalance induces the assembly of the inflammasome complex, which triggers the maturation of pro-IL-1beta into IL-1beta through the action of caspase-1. Targets also host mitochondria and induces mitochondrial depolarization. In addition of its role as a viroporin, acts as a lipid raft adhesion factor. In terms of biological role, cysteine protease required for the proteolytic auto-cleavage between the non-structural proteins NS2 and NS3. The N-terminus of NS3 is required for the function of NS2 protease (active region NS2-3). Promotes the initiation of viral particle assembly by mediating the interaction between structural and non-structural proteins. Functionally, displays three enzymatic activities: serine protease with a chymotrypsin-like fold, NTPase and RNA helicase. NS3 serine protease, in association with NS4A, is responsible for the cleavages of NS3-NS4A, NS4A-NS4B, NS4B-NS5A and NS5A-NS5B. The NS3/NS4A complex prevents phosphorylation of host IRF3, thus preventing the establishment of dsRNA induced antiviral state. The NS3/NS4A complex induces host amino acid transporter component SLC3A2, thus contributing to HCV propagation. NS3 RNA helicase binds to RNA and unwinds both dsDNA and dsRNA in the 3' to 5' direction, and likely resolves RNA complicated stable secondary structures in the template strand. Binds a single ATP and catalyzes the unzipping of a single base pair of dsRNA. Inhibits host antiviral proteins TBK1 and IRF3 thereby preventing the establishment of an antiviral state. Cleaves host MAVS/CARDIF thereby preventing the establishment of an antiviral state. Cleaves host TICAM1/TRIF, thereby disrupting TLR3 signaling and preventing the establishment of an antiviral state. Its function is as follows. Induces a specific membrane alteration that serves as a scaffold for the virus replication complex. This membrane alteration gives rise to the so-called ER-derived membranous web that contains the replication complex. NS4B self-interaction contributes to its function in membranous web formation. Promotes host TRIF protein degradation in a CASP8-dependent manner thereby inhibiting host TLR3-mediated interferon signaling. Disrupts the interaction between STING and TBK1 contributing to the inhibition of interferon signaling. Phosphorylated protein that is indispensable for viral replication and assembly. Both hypo- and hyperphosphorylated states are required for the viral life cycle. The hyperphosphorylated form of NS5A is an inhibitor of viral replication. Involved in RNA-binding and especially in binding to the viral genome. Zinc is essential for RNA-binding. Participates in the viral particle production as a result of its interaction with the mature viral core protein. Its interaction with host VAPB may target the viral replication complex to vesicles. Down-regulates viral IRES translation initiation. Mediates interferon resistance, presumably by interacting with and inhibiting host EIF2AK2/PKR. Prevents BIN1-induced apoptosis. Acts as a transcriptional activator of some host genes important for viral replication when localized in the nucleus. Via the interaction with host PACSIN2, modulates lipid droplet formation in order to promote virion assembly. Modulates TNFRSF21/DR6 signaling pathway for viral propagation. In terms of biological role, RNA-dependent RNA polymerase that performs primer-template recognition and RNA synthesis during viral replication. Initiates RNA transcription/replication at a flavin adenine dinucleotide (FAD), resulting in a 5'- FAD cap on viral RNAs. In this way, recognition of viral 5' RNA by host pattern recognition receptors can be bypassed, thereby evading activation of antiviral pathways. This is Genome polyprotein from Hepatitis C virus genotype 6a (isolate EUHK2) (HCV).